Reading from the N-terminus, the 239-residue chain is Ras-like protein B (239 aa).

Residues 13-18 (GVGKTA), 29-35 (VETYDPT), 59-60 (AG), 139-142 (NKSD), and 169-171 (SAK) contribute to the GTP site. The short motif at 32–40 (YDPTIEDSY) is the Effector region element. The segment at 191-227 (RQQQQGGRAQDRRPTGLGPMRDRDAGPEYPKTFRPDR) is disordered. Over residues 199–226 (AQDRRPTGLGPMRDRDAGPEYPKTFRPD) the composition is skewed to basic and acidic residues.

The protein belongs to the small GTPase superfamily. Ras family. As to quaternary structure, interacts with mpkA.

It carries out the reaction GTP + H2O = GDP + phosphate + H(+). Functionally, ras-like protein involved in the activation of Ras protein signal transduction. Ras proteins bind GDP/GTP and possess intrinsic GTPase activity. Plays a role in hyphal morphology and conidiophore development. Required for full virulence. This Aspergillus fumigatus (strain ATCC MYA-4609 / CBS 101355 / FGSC A1100 / Af293) (Neosartorya fumigata) protein is Ras-like protein B.